A 258-amino-acid polypeptide reads, in one-letter code: Alpha- and beta-fibrinogenase stejnefibrase-1 (258 aa).

The first 18 residues, 1-18, serve as a signal peptide directing secretion; sequence MELIRVLANLLILQLSYA. The propeptide occupies 19–24; sequence QKSSEL. The Peptidase S1 domain occupies 25 to 249; it reads IIGGDECNID…HLDWIQNIIA (225 aa). Intrachain disulfides connect cysteine 31-cysteine 163, cysteine 50-cysteine 66, cysteine 98-cysteine 256, cysteine 142-cysteine 210, cysteine 174-cysteine 189, and cysteine 200-cysteine 225. The Charge relay system role is filled by histidine 65. N-linked (GlcNAc...) asparagine glycosylation is present at asparagine 103. The Charge relay system role is filled by aspartate 110. 4 N-linked (GlcNAc...) asparagine glycosylation sites follow: asparagine 121, asparagine 122, asparagine 154, and asparagine 170. The active-site Charge relay system is the serine 204.

This sequence belongs to the peptidase S1 family. Snake venom subfamily. In terms of assembly, monomer. In terms of tissue distribution, expressed by the venom gland.

Its subcellular location is the secreted. Its activity is regulated as follows. Its activity is inhibited by PMSF and p-nitrophenyl-p-guanidinobenzoate (NPGB). Functionally, snake venom serine protease. Degrades concomitantly alpha- (FGA) and beta-chains of fibrinogen (FGB). The polypeptide is Alpha- and beta-fibrinogenase stejnefibrase-1 (Trimeresurus stejnegeri (Chinese green tree viper)).